Consider the following 173-residue polypeptide: Ribulose bisphosphate carboxylase small subunit, chloroplastic 2 (173 aa).

The N-terminal 33 residues, 1 to 33 (VVLSKECAKPLATPKVTLNKRGFATTIATKNRE), are a transit peptide targeting the chloroplast.

The protein belongs to the RuBisCO small chain family. Heterohexadecamer of 8 large and 8 small subunits.

It localises to the plastid. The protein localises to the chloroplast. Functionally, ruBisCO catalyzes two reactions: the carboxylation of D-ribulose 1,5-bisphosphate, the primary event in carbon dioxide fixation, as well as the oxidative fragmentation of the pentose substrate. Both reactions occur simultaneously and in competition at the same active site. Although the small subunit is not catalytic it is essential for maximal activity. The chain is Ribulose bisphosphate carboxylase small subunit, chloroplastic 2 from Acetabularia acetabulum (Mermaid's wine glass).